A 355-amino-acid chain; its full sequence is MDTVNNYRVLEHKAAGHDGTLTDGDGLLIFKPAFPQELEFYKAIQVRDVSRRKSSADGDAPLCSWMPTYLGVLNEGAKIEQSGDAALLKIDERLSDSTDNLDSIPVKSEKSKQYLVLENLLYGFSKPNILDIKLGKTLYDSKASLEKRERMKRVSETTTSGSLGFRICGMKIQKNPSVLNQLSLEYYEEEADSDYIFINKLYGRSRTDQNVSDAIELYFNNPHLSDARKHQLKKTFLKRLQLFYNTMLEEEVRMISSSLLFIYEGDPERWELLNDVDKLMRDDFIDDDDDDDDNDDDDDDDAEGSSEGPKDKKTTGSLSSMSLIDFAHSEITPGKGYDENVIEGVETLLDIFMKF.

Met1 carries the N-acetylmethionine modification. Lys31 is an ATP binding site. The residue at position 97 (Ser97) is a Phosphoserine. ATP-binding positions include 118–120 (ENL) and Asp131. 127-135 (PNILDIKLG) is a substrate binding site. Residues Glu271 and Asn274 each contribute to the Ca(2+) site. Residues 284–304 (FIDDDDDDDDNDDDDDDDAEG) are compositionally biased toward acidic residues. The tract at residues 284–317 (FIDDDDDDDDNDDDDDDDAEGSSEGPKDKKTTGS) is disordered. Asp325 provides a ligand contact to ATP. Position 334 (Gly334) interacts with Ca(2+).

The protein belongs to the inositol phosphokinase (IPK) family. As to quaternary structure, interacts with ARG80 and MCM1. It depends on Ca(2+) as a cofactor.

The protein localises to the nucleus. It carries out the reaction 1D-myo-inositol 1,4,5-trisphosphate + 2 ATP = 1D-myo-inositol 1,3,4,5,6-pentakisphosphate + 2 ADP + 2 H(+). The enzyme catalyses 1D-myo-inositol 1,4,5-trisphosphate + ATP = 1D-myo-inositol 1,4,5,6-tetrakisphosphate + ADP + H(+). It catalyses the reaction 1D-myo-inositol 1,4,5-trisphosphate + ATP = 1D-myo-inositol 1,3,4,5-tetrakisphosphate + ADP + H(+). The catalysed reaction is 1D-myo-inositol 1,4,5,6-tetrakisphosphate + ATP = 1D-myo-inositol 1,3,4,5,6-pentakisphosphate + ADP + H(+). It carries out the reaction a 1,2-diacyl-sn-glycero-3-phospho-(1D-myo-inositol-4,5-bisphosphate) + ATP = a 1,2-diacyl-sn-glycero-3-phospho-(1D-myo-inositol-3,4,5-trisphosphate) + ADP + H(+). Its function is as follows. Inositol phosphate kinase with both monophosphoinositol and diphosphoinositol polyphosphate synthase activities. Able to phosphorylate inositol 1,4,5-trisphosphate (Ins(1,4,5)P3) on both the carbon-3 and carbon-6 positions to synthesize inositol 1,3,4,5-tetrakisphosphate (Ins(1,3,4,5)P4) and inositol 1,4,5,6-tetrakisphosphate (Ins(1,4,5,6)P4), and then to subsequently phosphorylate and convert either isomer of InsP4 to inositol 1,3,4,5,6-pentakisphosphate (Ins(1,3,4,5,6)P5). Its predominant in vivo catalytic function is to convert Ins(1,4,5)P3 to Ins(1,4,5,6)P4 to Ins(1,3,4,5,6)P5 via 6- and 3-kinase activities. It can also use Ins(1,3,4,5,6)P5 as a substrate and act as a diphosphoinositol polyphosphate synthase to generate two different isomers of PP-InsP4. Also has a role in transcription regulation. Forms a complex with ARG80, ARG81 and MCM1 (ArgR-MCM1), which coordinates the expression of arginine anabolic and catabolic genes in response to arginine. Recruits ARG80 and MCM21 to stabilize them. Neither the kinase activity nor inositol phosphates are required for the formation of ArgR-MCM1 transcriptional complexes on DNA promoter elements and the control of arginine metabolism. In contrast, only the catalytic activity is required for PHO gene repression by phosphate and for NCR gene activation in response to nitrogen availability, indicating a role for inositol pyrophosphates in these controls. Inositol polyphosphates may be involved in the regulation of chromatin remodeling of transcription. Regulates nuclear mRNA export via inositol phosphate metabolism. Also has lipid kinase activity, transforming the lipid inositol phosphatidylinositol 4,5-bisphosphate (PI(4,5)P2) into phosphatidylinositol 3,4,5-trisphosphate (PI(3,4,5)P3) in the nucleus. Its kinase activity is necessary for the propagation of most [PSI+] prion variants. This is Inositol polyphosphate multikinase (ARG82) from Saccharomyces cerevisiae (strain ATCC 204508 / S288c) (Baker's yeast).